Consider the following 600-residue polypeptide: Proline--tRNA ligase (600 aa).

This sequence belongs to the class-II aminoacyl-tRNA synthetase family. ProS type 1 subfamily. In terms of assembly, homodimer.

It localises to the cytoplasm. The catalysed reaction is tRNA(Pro) + L-proline + ATP = L-prolyl-tRNA(Pro) + AMP + diphosphate. Its function is as follows. Catalyzes the attachment of proline to tRNA(Pro) in a two-step reaction: proline is first activated by ATP to form Pro-AMP and then transferred to the acceptor end of tRNA(Pro). As ProRS can inadvertently accommodate and process non-cognate amino acids such as alanine and cysteine, to avoid such errors it has two additional distinct editing activities against alanine. One activity is designated as 'pretransfer' editing and involves the tRNA(Pro)-independent hydrolysis of activated Ala-AMP. The other activity is designated 'posttransfer' editing and involves deacylation of mischarged Ala-tRNA(Pro). The misacylated Cys-tRNA(Pro) is not edited by ProRS. This chain is Proline--tRNA ligase, found in Prochlorococcus marinus (strain MIT 9215).